The following is a 491-amino-acid chain: Trehalose-6-phosphate synthase (491 aa).

Position 22 (R22) interacts with D-glucose 6-phosphate. 42 to 43 lines the UDP-alpha-D-glucose pocket; sequence GG. Residues Y100 and D154 each contribute to the D-glucose 6-phosphate site. The UDP-alpha-D-glucose site is built by R296 and K301. R334 is a binding site for D-glucose 6-phosphate. Residue 399–403 participates in UDP-alpha-D-glucose binding; that stretch reads LVAKE.

Belongs to the glycosyltransferase 20 family. In terms of assembly, homotetramer.

It carries out the reaction ADP-alpha-D-glucose + D-glucose 6-phosphate = alpha,alpha-trehalose 6-phosphate + ADP + H(+). The catalysed reaction is CDP-alpha-D-glucose + D-glucose 6-phosphate = alpha,alpha-trehalose 6-phosphate + CDP + H(+). It catalyses the reaction GDP-alpha-D-glucose + D-glucose 6-phosphate = alpha,alpha-trehalose 6-phosphate + GDP + H(+). The enzyme catalyses TDP-alpha-D-glucose + D-glucose 6-phosphate = 5-methyl-UDP + alpha,alpha-trehalose 6-phosphate + H(+). It carries out the reaction D-glucose 6-phosphate + UDP-alpha-D-glucose = alpha,alpha-trehalose 6-phosphate + UDP + H(+). Its pathway is glycan biosynthesis; trehalose biosynthesis. Probably involved in the osmoprotection via the biosynthesis of trehalose and in the production of glycogen and alpha-glucan via the TreS-Pep2 branch involved in the biosynthesis of maltose-1-phosphate (M1P). Catalyzes the transfer of glucose from UDP-glucose (UDP-Glc) to D-glucose 6-phosphate (Glc-6-P) to form trehalose-6-phosphate. Probably also able to use ADP-Glc, CDP-Glc, GDP-Glc and TDP-Glc as glucosyl donors. In Mycolicibacterium vanbaalenii (strain DSM 7251 / JCM 13017 / BCRC 16820 / KCTC 9966 / NRRL B-24157 / PYR-1) (Mycobacterium vanbaalenii), this protein is Trehalose-6-phosphate synthase.